The primary structure comprises 1483 residues: Heme-responsive zinc finger transcription factor HAP1 (1483 aa).

A compositionally biased stretch (polar residues) spans 1–50 (MSNTPYNSSVPSIASMTQSSVSRSPNMHTATTPGANTSSNSPPLHMSSDS). Residues 1 to 56 (MSNTPYNSSVPSIASMTQSSVSRSPNMHTATTPGANTSSNSPPLHMSSDSSKIKRK) are disordered. Residues Cys-64, Cys-67, Cys-74, Cys-81, Cys-84, and Cys-93 each coordinate Zn(2+). The segment at residues 64–93 (CTICRKRKVKCDKLRPHCQQCTKTGVAHLC) is a DNA-binding region (zn(2)-C6 fungal-type). Residues 105 to 134 (EKELLKDNELKKLRERVKSLEKTLSKVHSS) adopt a coiled-coil conformation. The tract at residues 126–208 (KTLSKVHSSP…ANSSSLSISN (83 aa)) is disordered. The segment covering 130–142 (KVHSSPSSNSLKS) has biased composition (low complexity). Composition is skewed to polar residues over residues 143-152 (YNTPESSNLF) and 160-176 (TLVN…SHMH). The segment covering 177 to 208 (QQQQQQQQQEQQQDFSRSANANANSSSLSISN) has biased composition (low complexity). The segment at 244–444 (KGDPYLKLLW…NTIPHHQPQS (201 aa)) is heme-responsive; required for HMC formation. HRM repeat units lie at residues 280–285 (KCPINH), 299–304 (KCPVDH), 323–328 (KCPVDH), 347–352 (RCPVDH), 389–394 (KCPVDH), and 415–420 (RCPIDH). Composition is skewed to polar residues over residues 432-447 (STHN…SGSH) and 706-734 (QLNA…NPTL). Disordered regions lie at residues 432–458 (STHN…SRKH) and 706–767 (QLNA…KENQ). Positions 735 to 759 (NNNMSAATTNSSSRSGSADSRSGSN) are enriched in low complexity. An HRM 7 repeat occupies 1192 to 1197 (KCPVYQ). Residues 1384–1411 (TANTDTSANGSALSTLTSPQGSDLASNS) are disordered. Over residues 1388–1411 (DTSANGSALSTLTSPQGSDLASNS) the composition is skewed to polar residues.

As to quaternary structure, binds DNA as a homodimer. Interacts with SRO9 and YDJ1. In the absence of heme, binds to at least four cellular proteins, including YDJ1 and SRO9, forming a high-molecular-weight complex (HMC) which results in repression of its activity and dictates its DNA-binding specificity.

Its subcellular location is the nucleus. Its function is as follows. Regulation of oxygen dependent gene expression. It modulates the expression of Iso-1 (CYP1) and Iso-2 (CYP3) cytochrome c. In response to heme, promotes transcription of genes encoding functions required for respiration, controlling oxidative damage and repression of anaerobic genes. Binds to the sequence 5'-CGGNNNTNNCGG-3'. Is non-functional in terms of iso-1 cytochrome c expression in strain S288c and its derivatives. This is Heme-responsive zinc finger transcription factor HAP1 (HAP1) from Saccharomyces cerevisiae (Baker's yeast).